A 972-amino-acid polypeptide reads, in one-letter code: Translation initiation factor IF-2 (972 aa).

The span at 48-63 (DHLRKSHGATDGDKRK) shows a compositional bias: basic and acidic residues. 2 disordered regions span residues 48–85 (DHLRKSHGATDGDKRKITLTRKHTSEIKQSDATGKART) and 99–385 (RDDV…QAPT). Positions 105 to 114 (GAEQGQAQVA) are enriched in low complexity. Over residues 121–181 (ELKRREEEAR…EEEAAAKRVA (61 aa)) the composition is skewed to basic and acidic residues. The span at 182–205 (AEAAAAQQQAAAQQAAAAEQQEAA) shows a compositional bias: low complexity. A compositionally biased stretch (basic and acidic residues) spans 212-263 (DEARAAAERAAQREAAKKAEDAAREAADKARAEQEEISKRRAAAEAEARAIR). The segment covering 279–288 (PPKPVEPPKP) has biased composition (pro residues). The span at 313–328 (PAGAAAPATTAPAGAG) shows a compositional bias: low complexity. The span at 357–370 (SSGGVDRGWRGGPK) shows a compositional bias: gly residues. Positions 472–641 (PRPPVVTVMG…LLQAEVLELK (170 aa)) constitute a tr-type G domain. A G1 region spans residues 481–488 (GHVDHGKT). 481-488 (GHVDHGKT) contributes to the GTP binding site. Positions 506-510 (GITQH) are G2. Residues 527-530 (DTPG) are G3. GTP contacts are provided by residues 527–531 (DTPGH) and 581–584 (NKID). The G4 stretch occupies residues 581 to 584 (NKID). The G5 stretch occupies residues 617–619 (SAK).

It belongs to the TRAFAC class translation factor GTPase superfamily. Classic translation factor GTPase family. IF-2 subfamily.

The protein resides in the cytoplasm. Functionally, one of the essential components for the initiation of protein synthesis. Protects formylmethionyl-tRNA from spontaneous hydrolysis and promotes its binding to the 30S ribosomal subunits. Also involved in the hydrolysis of GTP during the formation of the 70S ribosomal complex. The chain is Translation initiation factor IF-2 from Burkholderia lata (strain ATCC 17760 / DSM 23089 / LMG 22485 / NCIMB 9086 / R18194 / 383).